The chain runs to 190 residues: Adenylate kinase (190 aa).

10–15 contacts ATP; that stretch reads AAGKGT. The tract at residues 30–59 is NMP; sequence STGDMLRAAIASGSELGQRVSGIMERGELV. AMP is bound by residues threonine 31, arginine 36, 57 to 59, 85 to 88, and glutamine 92; these read ELV and GFPR. The tract at residues 126–136 is LID; that stretch reads GRFAESGRADD. Arginine 127 contacts ATP. Residues arginine 133 and arginine 144 each coordinate AMP. Residue glycine 172 participates in ATP binding.

Belongs to the adenylate kinase family. As to quaternary structure, monomer.

The protein resides in the cytoplasm. It catalyses the reaction AMP + ATP = 2 ADP. Its pathway is purine metabolism; AMP biosynthesis via salvage pathway; AMP from ADP: step 1/1. In terms of biological role, catalyzes the reversible transfer of the terminal phosphate group between ATP and AMP. Plays an important role in cellular energy homeostasis and in adenine nucleotide metabolism. The polypeptide is Adenylate kinase (Phenylobacterium zucineum (strain HLK1)).